Here is a 597-residue protein sequence, read N- to C-terminus: Lysine--tRNA ligase (597 aa).

2 residues coordinate Mg(2+): glutamate 501 and glutamate 508.

The protein belongs to the class-II aminoacyl-tRNA synthetase family. As to quaternary structure, homodimer. It depends on Mg(2+) as a cofactor.

The protein resides in the cytoplasm. It catalyses the reaction tRNA(Lys) + L-lysine + ATP = L-lysyl-tRNA(Lys) + AMP + diphosphate. The polypeptide is Lysine--tRNA ligase (lysS) (Aquifex aeolicus (strain VF5)).